The chain runs to 357 residues: CRISPR system Cms protein Csm5 (357 aa).

This sequence belongs to the CRISPR-associated Csm5 family. As to quaternary structure, part of the Csm effector complex that includes at least Cas10(1), Csm2(3), Csm3(5), Csm4(1), Csm5(1) and mature crRNA. The Csm complex is elongated and slightly twisted with a maximal length of 215 Angstroms and a diameter of 75-80 Angstroms. It has been modeled to have a central protein filamant of Csm3 subunits along which the dsRNA helix of paired crRNA and target RNA binds. The filament is capped at one end by Cas10 and Csm4 and at the other end by Csm5; ssDNA is thought to bind to the N-terminal HD domain of Cas10. Csm with a precursor crRNA does not include Csm5, while Cas6, the enzyme probably involved in pre-crRNA processing, is found associated with a subset of the Csm complex.

CRISPR (clustered regularly interspaced short palindromic repeat) is an adaptive immune system that provides protection against mobile genetic elements (viruses, transposable elements and conjugative plasmids). CRISPR clusters contain spacers, sequences complementary to antecedent mobile elements, and target invading nucleic acids. CRISPR clusters are transcribed and processed into CRISPR RNA (crRNA). The type III-A Csm effector complex binds crRNA and acts as a crRNA-guided RNase, DNase and cyclic oligoadenylate synthase; binding of target RNA cognate to the crRNA is required for all activities. In a heterologous host this Csm effector complex restricts ssRNA phage MS2, suggesting it may target RNA viruses in vivo. Its function is as follows. Csm functions as a non-specific ssDNase. Base-pairing between crRNA and target RNA to form a ternary Csm complex activates a ssDNase activity; target RNA cleavage suppresses the ssDNase, a temporal control that prevents uncontrolled DNA degradation. Viral RNA transcripts probably tether the Csm complex to the viral genome, recruiting Cas10 ssDNA activity which is able to degrade DNA in the transcription bubble, spatially controlling the DNase activity. Functionally, this subunit might be involved in maturation of a crRNA intermediate to its mature form. The chain is CRISPR system Cms protein Csm5 from Streptococcus thermophilus.